Reading from the N-terminus, the 131-residue chain is Large ribosomal subunit protein bL19 (131 aa).

The span at 111 to 124 (RIAERAERGSEKGK) shows a compositional bias: basic and acidic residues. A disordered region spans residues 111-131 (RIAERAERGSEKGKTTPAAAE).

The protein belongs to the bacterial ribosomal protein bL19 family.

Its function is as follows. This protein is located at the 30S-50S ribosomal subunit interface and may play a role in the structure and function of the aminoacyl-tRNA binding site. In Methylobacterium nodulans (strain LMG 21967 / CNCM I-2342 / ORS 2060), this protein is Large ribosomal subunit protein bL19.